The primary structure comprises 312 residues: D-alanine--D-alanine ligase (312 aa).

The ATP-grasp domain occupies 108-308; it reads KLVWQQTGIP…YSELVVKVLS (201 aa). Residue 138–193 coordinates ATP; that stretch reads VAKLGVPLFVKPASEGSSVAVEKVKSADALPAALEEAAKHDKIVIVEKSIEGGGEY. D262, E275, and N277 together coordinate Mg(2+).

Belongs to the D-alanine--D-alanine ligase family. Mg(2+) serves as cofactor. Requires Mn(2+) as cofactor.

Its subcellular location is the cytoplasm. The catalysed reaction is 2 D-alanine + ATP = D-alanyl-D-alanine + ADP + phosphate + H(+). It functions in the pathway cell wall biogenesis; peptidoglycan biosynthesis. In terms of biological role, cell wall formation. The chain is D-alanine--D-alanine ligase from Burkholderia mallei (strain NCTC 10247).